The sequence spans 601 residues: Serine/threonine-protein phosphatase 2A 65 kDa regulatory subunit A beta isoform (601 aa).

N-acetylalanine is present on A2. HEAT repeat units lie at residues 20 to 58, 59 to 96, 97 to 135, 136 to 173, 174 to 212, 213 to 251, 252 to 290, 291 to 333, 334 to 372, 373 to 411, 412 to 450, 451 to 489, 490 to 528, 529 to 567, and 568 to 601; these read DSLYPIAVLIDELRNEDVQLRLNSIKKLSTIALALGVER, TRTELLPFLTDTIYDEDEVLLALAEQLGNFTGLVGGPD, FAHCLLPPLESLATVEETVVRDKAVESLRQISQEHTPVA, LEAHFVPLVKRLASGDWFTSRTSACGLFSVCYPRASNA, VKAEIRQHFRSLCSDDTPMVRRAAASKLGEFAKVLELDS, VKTEIVPLFTNLASDEQDSVRLLAVEACVSIAQLLSQDD, LEALVMPTLRQAAEDKSWRVRYMVADKFSELQKAVGPKI, ALSD…RETV, IMNQILPYIKELVSDTNQHVKSALASVIMGLSTVLGKEN, TIEHLLPLFLAQLKDECPEVRLNIISNLDCVNEVIGIRQ, LSQSLLPAIVELAEDAKWRVRLAIIEYMPLLAGQLGVEF, FDEKLNSLCMAWLVDHVYAIREAATNNLMKLVQKFGTEW, AQNTIVPKVLVMANDPNYLHRMTTLFCINALSEACGKEI, TTKQMLPIVLKMAGDQVANVRFNVAKSLQKIGPILDTNA, and LQGEVKPVLQKLGQDEDMDVKYFAQEAISVLALA.

It belongs to the phosphatase 2A regulatory subunit A family. In terms of assembly, PP2A consists of a common heterodimeric core enzyme, composed of a 36 kDa catalytic subunit (subunit C) and a 65 kDa constant regulatory subunit (PR65 or subunit A), that associates with a variety of regulatory subunits. Proteins that associate with the core dimer include three families of regulatory subunits B (the R2/B/PR55/B55, R3/B''/PR72/PR130/PR59 and R5/B'/B56 families), the 48 kDa variable regulatory subunit, viral proteins, and cell signaling molecules. Interacts with IPO9. Interacts with SGO1. Interacts with RAF1.

Functionally, the PR65 subunit of protein phosphatase 2A serves as a scaffolding molecule to coordinate the assembly of the catalytic subunit and a variable regulatory B subunit. The chain is Serine/threonine-protein phosphatase 2A 65 kDa regulatory subunit A beta isoform (Ppp2r1b) from Rattus norvegicus (Rat).